The chain runs to 237 residues: Small ribosomal subunit protein uS2m (237 aa).

The protein belongs to the universal ribosomal protein uS2 family.

It localises to the mitochondrion. This is Small ribosomal subunit protein uS2m (RPS2) from Marchantia polymorpha (Common liverwort).